A 293-amino-acid polypeptide reads, in one-letter code: Outer membrane protein assembly factor BamD (293 aa).

The signal sequence occupies residues 1–26 (MIQRPTFFSPIHLLAVLLATFILITG). Cys27 is lipidated: N-palmitoyl cysteine. Residue Cys27 is the site of S-diacylglycerol cysteine attachment.

It belongs to the BamD family. In terms of assembly, part of the Bam complex.

The protein localises to the cell outer membrane. Part of the outer membrane protein assembly complex, which is involved in assembly and insertion of beta-barrel proteins into the outer membrane. This Xylella fastidiosa (strain Temecula1 / ATCC 700964) protein is Outer membrane protein assembly factor BamD.